Here is a 225-residue protein sequence, read N- to C-terminus: Testis-expressed protein 30 (225 aa).

The sequence is that of Testis-expressed protein 30 (Tex30) from Mus musculus (Mouse).